The sequence spans 134 residues: Large ribosomal subunit protein bL20 (134 aa).

It belongs to the bacterial ribosomal protein bL20 family.

Functionally, binds directly to 23S ribosomal RNA and is necessary for the in vitro assembly process of the 50S ribosomal subunit. It is not involved in the protein synthesizing functions of that subunit. The sequence is that of Large ribosomal subunit protein bL20 from Rhizobium etli (strain CIAT 652).